Consider the following 83-residue polypeptide: Arminin 3a (83 aa).

A signal peptide spans 1 to 18; it reads MKTVFAILFLTFIALTCA. Positions 19–57 are excised as a propeptide; that stretch reads RNYEDLKEKIKNEVEREIFEDLEEESDELENNFKKFNDA. A80 carries the post-translational modification Alanine amide.

This sequence belongs to the arminin family. In terms of tissue distribution, expressed in entodermal epithelium along the body column.

It localises to the secreted. Its subcellular location is the target cell membrane. Its function is as follows. Antimicrobial peptide with a broad-spectrum antimicrobial activity. Keeps its antibacterial activity under a wide range of salt concentrations that mimic physiological conditions of human blood, which is surprising, since Hydra is an obligate freshwater animal with nearly no salt tolerance. Does not affect red blood cells. This Hydra vulgaris (Hydra) protein is Arminin 3a.